Consider the following 157-residue polypeptide: uncharacterized protein (157 aa).

This is an uncharacterized protein from Caenorhabditis elegans.